Reading from the N-terminus, the 488-residue chain is MLSLATLDMLLSISEGELIEEMVVGLLAAPQLAIFFEKFPRIKRALMKDIPGWKQNLQQRIREASVPPGLANEFSLYQQSLLEDSPQFYAHLPDIVAQLQDLHSPFATQAKTLVQTADLAKNPPGGDSLQTLFLQRWRVSLILQTITIHHQLLEQEREQLLAELQRRLALSGALEPILTTNDNAAGRLWDMSQGHLQRGDYQLLLQYGDFLQQQPELIRLAEQLGRSRSAKAQPAPDARYEPYTVMVRQPDSVPEEVSGIHQSNDILRLLPTELVMLGMSELEFEFYRRLLERRLLTYRLQGDNWQEKTQQRPVSLKQNDEQPRGPFIVCVDTSGSMGGFNEQCAKAFCLALLRIALADNRRCYIMLFATEIIHYELSADNGIEQAIRFLNQHFRGGTDLAACLANTLNKMEDREWYDADAVIISDFIAQRLPEELVRKIKIQQQAHQHRFHAVAMSAYGKPGIMRIFDHIWRFDTSLKSRLIRRWKR.

Belongs to the ViaA family. In terms of assembly, homodimer. Interacts with RavA.

The protein localises to the cytoplasm. In terms of biological role, component of the RavA-ViaA chaperone complex, which may act on the membrane to optimize the function of some of the respiratory chains. ViaA stimulates the ATPase activity of RavA. This Yersinia pseudotuberculosis serotype O:1b (strain IP 31758) protein is Regulatory protein ViaA.